The following is a 191-amino-acid chain: Chorion class B protein Ld10 (191 aa).

A signal peptide spans 1 to 21; that stretch reads MSAKIILVFCAQALFVQSALS.

This sequence belongs to the chorion protein family.

Functionally, this protein is one of many from the eggshell of the gypsy moth. This chain is Chorion class B protein Ld10, found in Lymantria dispar (Gypsy moth).